Reading from the N-terminus, the 777-residue chain is Androgen receptor (777 aa).

Residues 1-416 (MEVHIGLGGV…IDYYFPPQKP (416 aa)) form a modulating region. Disordered regions lie at residues 53–95 (CVHP…QAPQ), 110–132 (GEQG…YPES), and 205–241 (RRAG…LSEP). 2 consecutive NR C4-type zinc fingers follow at residues 417 to 434 (CLSC…ALTC) and 453 to 472 (CASR…CPSC). The nuclear receptor DNA-binding region spans 417–489 (CLSCEDEASG…AGMTLGARKL (73 aa)). Residues 526 to 757 (SCQPIFLNVL…DFPEMMSEII (232 aa)) enclose the NR LBD domain. Asn563, Arg610, and Thr735 together coordinate 17beta-hydroxy-5alpha-androstan-3-one.

This sequence belongs to the nuclear hormone receptor family. NR3 subfamily. Binds DNA as a homodimer. Interacts via the ligand-binding domain with LXXLL and FXXLF motifs from coactivator proteins. Interacts (via ligand-binding domain) with TRIM68. In terms of tissue distribution, detected in somatic Leydig and Sertoli cells in testis with high level expression. Also detected at lower expression levels in forebrain and heart.

The protein localises to the nucleus. The protein resides in the cytoplasm. Its function is as follows. Steroid hormone receptors are ligand-activated transcription factors that regulate eukaryotic gene expression and affect cellular proliferation and differentiation in target tissues. Transcription factor activity is modulated by bound coactivator and corepressor proteins. This chain is Androgen receptor (ar), found in Aquarana catesbeiana (American bullfrog).